A 1279-amino-acid chain; its full sequence is Sterol regulatory element-binding protein cleavage-activating protein (1279 aa).

Residues 1 to 18 (MTLTERLREKISQAFYNH) lie on the Cytoplasmic side of the membrane. Residues 19–39 (GLLCASYPIPIILFTGLCILA) form a helical membrane-spanning segment. The Lumenal portion of the chain corresponds to 40–279 (CCYPLLKLPL…SLVHVHFKEE (240 aa)). The segment at 46 to 284 (KLPLPGTGPV…HFKEEIGIAE (239 aa)) is loop-1. Residues 60-81 (PVKDYSPPPSASDHKPGEPSEQ) form a disordered region. An N-linked (GlcNAc...) asparagine glycan is attached at N263. The helical transmembrane segment at 280-300 (IGIAELIPLVTTYIILFAYIY) threads the bilayer. Residues 284–442 (ELIPLVTTYI…MPFFTTVLSI (159 aa)) enclose the SSD domain. Over 301–312 (FSTRKIDMVKSK) the chain is Cytoplasmic. A helical transmembrane segment spans residues 313–333 (WGLALAAVVTVLSSLLMSVGL). Over 334–344 (CTLFGLTPTLN) the chain is Lumenal. Residues 345–365 (GGEIFPYLVVVIGLENVLVLT) form a helical membrane-spanning segment. The Cytoplasmic portion of the chain corresponds to 366-401 (KSVVSTPVDLEVKLRIAQGLSSESWSIMKNMATELG). A helical transmembrane segment spans residues 402-422 (IILIGYFTLVPAIQEFCLFAV). V423 is a topological domain (lumenal). A helical transmembrane segment spans residues 424-444 (GLVSDFFLQMPFFTTVLSIDI). Residues 445 to 518 (RRMELADLNK…FLARTRLAQR (74 aa)) are Cytoplasmic-facing. The short motif at 447–452 (MELADL) is the ER export signal element. Residues K454 and K466 each participate in a glycyl lysine isopeptide (Lys-Gly) (interchain with G-Cter in ubiquitin) cross-link. Residues 519-539 (LIMAGTVVWIGILAYTDPAGL) traverse the membrane as a helical segment. The loop-7 stretch occupies residues 535 to 710 (DPAGLRTYLA…QAHRDVTLYK (176 aa)). Residues 540-707 (RTYLAAQVTE…GVAQAHRDVT (168 aa)) are Lumenal-facing. Positions 588 to 617 (LENQTLPGEPPEPGGQAEGVHDSPAPEVTW) are disordered. 2 N-linked (GlcNAc...) asparagine glycosylation sites follow: N590 and N641. Positions 668 to 696 (EGRHPQDSRSAWSPPQPAQGGLWDAGPKG) are disordered. The chain crosses the membrane as a helical span at residues 708 to 728 (LYKVAALGLATGILLVLLLCL). Residues 729–1279 (YRVLCPRNYG…YVPSVLEKLD (551 aa)) are Cytoplasmic-facing. The segment at 730–1279 (RVLCPRNYGQ…YVPSVLEKLD (550 aa)) is interaction with SREBF2. A WD 1 repeat occupies 770–810 (VLRGHLMDIECLASDGMLLVSCCLAGHVCVWDAQTGDCLTR). Phosphoserine occurs at positions 821, 837, 843, and 850. Disordered regions lie at residues 834–868 (ERLSDGGKASPEEPGDSPPLRHRPRGTPLPSLFGD), 883–903 (HPRLPELDHPEPRHRSGCRRT), and 925–959 (VPMHTPAPRPPSPGPTPPQTPEDEGSFPPEKGSPS). Residues 885–896 (RLPELDHPEPRH) show a composition bias toward basic and acidic residues. Over residues 929-944 (TPAPRPPSPGPTPPQT) the composition is skewed to pro residues. At S936 the chain carries Phosphoserine. WD repeat units lie at residues 952-1002 (PPEK…LRCS) and 1005-1042 (EVASGITALVFLDKRIVAARLNGSLDFFSLETHTALSP). Position 1051 is an omega-N-methylarginine (R1051). WD repeat units follow at residues 1077–1114 (AHQKPITALKAAAGRLVTGSQDHTLRVFRLEDSCCLFT), 1117–1155 (GHSGAITTVYIDQTMVLASGGQDGAICLWDVLTGSRVSH), 1158–1195 (AHRGDVTSLTCTTSCVISSGLDDLISIWDRSTGIKLYS), and 1197–1235 (QQDLGCGASLGVISDNLLVTGGQGCVSFWDLNYGDLLQT).

It belongs to the WD repeat SCAP family. In terms of assembly, membrane region forms a homotetramer. Component of the SCAP-SREBP complex (composed of SCAP and SREBF1/SREBP1 or SREBF2/SREBP2); interacts with SREBF1/SREBP1 or SREBF2/SREBP2 through its C-terminal cytoplasmic domain. Forms a ternary complex with INSIG1 or INSIG2 through its transmembrane domains at high sterol concentrations. Interacts with PAQR3; the interaction anchors the SCAP-SREBP complex to the Golgi apparatus in low cholesterol conditions. Interacts with the SEC23-SEC24 complex in a SAR1-GTP-dependent manner through an ER export signal in its third cytoplasmic loop. Interacts with RNF139; the interaction inhibits the interaction of SCAP with SEC24B and hampering the ER to Golgi transport of the SCAP-SREBP complex. Interacts with SPRING1. Ubiquitinated at Lys-454 and Lys-466. RNF145 triggers ubiquitination of SCAP, likely inhibiting SCAP-SREBP complex transport to the Golgi apparatus and the subsequent processing/maturation of SREBF2/SREBP2. Widely expressed with higher levels in lung, kidney, gut, brain and adipose tissue. In terms of tissue distribution, expressed in liver and muscle. Isoform 3 expressed in testis. As to expression, expressed in testis.

It is found in the endoplasmic reticulum membrane. The protein resides in the golgi apparatus membrane. The protein localises to the cytoplasmic vesicle. It localises to the COPII-coated vesicle membrane. Escort protein required for cholesterol as well as lipid homeostasis. Regulates export of the SCAP-SREBP complex from the endoplasmic reticulum to the Golgi upon low cholesterol, thereby regulating the processing of sterol regulatory element-binding proteins (SREBPs) SREBF1/SREBP1 and SREBF2/SREBP2. At high sterol concentrations, formation of a ternary complex with INSIG (INSIG1 or INSIG2) leads to mask the ER export signal in SCAP, promoting retention of the complex in the endoplasmic reticulum. Low sterol concentrations trigger release of INSIG, a conformational change in the SSD domain of SCAP, unmasking of the ER export signal, promoting recruitment into COPII-coated vesicles and transport of the SCAP-SREBP to the Golgi: in the Golgi, SREBPs are then processed, releasing the transcription factor fragment of SREBPs from the membrane, its import into the nucleus and up-regulation of LDLR, INSIG1 and the mevalonate pathway. Binds cholesterol via its SSD domain. The sequence is that of Sterol regulatory element-binding protein cleavage-activating protein from Sus scrofa (Pig).